The following is a 127-amino-acid chain: uncharacterized protein (127 aa).

The HTH asnC-type domain maps to 1-46; that stretch reads MEVGLSPSACLRRIKLMEQAGVIRGYTALVDPTQSESTIAVIINIT.

Functionally, not known, symbiotically active. This is an uncharacterized protein from Sinorhizobium fredii (strain NBRC 101917 / NGR234).